The sequence spans 80 residues: MNINLQFHSTGKRTELNFDETDKIELIKNSIRIMEGINPQEQKLIFDGKVLKDTSTLKSCGIKDGSTISVLFEKSSNFLK.

It belongs to the ubiquitin family.

This Dictyostelium discoideum (Social amoeba) protein is Ubiquitin-like protein NEDD8-like protein 2 (nedd8l2).